The following is a 104-amino-acid chain: Transcription factor S (104 aa).

Residues Cys-4, Cys-7, Cys-20, Cys-22, Cys-65, Cys-68, Cys-93, and Cys-96 each contribute to the Zn(2+) site. The segment at 4 to 22 adopts a C4-type zinc-finger fold; it reads CPKCGAVMFPSEGKFKCQC. Residues 61-101 form a TFIIS-type zinc finger; it reads TRVECPKCGNMEAFWWLQQTRRADESETRFFRCTRCKHTWR.

Belongs to the archaeal RpoM/eukaryotic RPA12/RPB9/RPC11 RNA polymerase family.

Functionally, induces RNA cleavage activity in the RNA polymerase. In its presence, the cleavage activity of the RNA polymerase truncates the RNA back to position +15 in a stepwise manner by releasing mainly dinucleotides from the 3'-end of the nascent RNA. The truncated RNAs are able to continue elongation. Involved in transcriptional proofreading and fidelity. Misincorporation of nucleotides during elongation of transcription leads to arrested elongation complexes which are rescued by TFS-promoted removal of a dinucleotide from the 3'-end. TFS is able to induce a cleavage resynthesis cycle in stalled elongation complexes (resulting from the next missing nucleotide or a reduced incorporation rate of a wrong nucleotide) preventing misincorporation and enabling proofreading in a post-incorporation manner. Pausing of elongation complexes is the main determinant of TFS-induced RNA cleavage. The chain is Transcription factor S from Methanothermobacter thermautotrophicus (strain ATCC 29096 / DSM 1053 / JCM 10044 / NBRC 100330 / Delta H) (Methanobacterium thermoautotrophicum).